Consider the following 164-residue polypeptide: MERFLENAMYASRWLLAPVYFGLSLGLIALTIKFFQEIFHILPHIFSVSESDMILTLLSLVDMTLVGGLLVMVMFSGYENFVSQLDINEGKEKLSWLGKMDATSLKNKVAASIVAISSIHLLRVFMDAKNVPDNKLMWYVIIHLTFVLSAFVMGYLDRLTKVKH.

4 consecutive transmembrane segments (helical) span residues L15–F35, M53–V73, V109–M126, and L136–L156.

It belongs to the UPF0114 family.

It localises to the cell membrane. This chain is UPF0114 protein KPN78578_33570, found in Klebsiella pneumoniae subsp. pneumoniae (strain ATCC 700721 / MGH 78578).